Consider the following 434-residue polypeptide: Transcription elongation factor B polypeptide 3 (434 aa).

A disordered region spans residues 142–161 (KPEPVDVHEQQASSSSMSYQ). Residues 151–160 (QQASSSSMSY) are compositionally biased toward polar residues. Residues 221 to 230 (TLVSLCQTVL) are BC box. Residues 237–281 (IDHVGIVPFDLLKPVLDHASTDQLRHILDVNPMLVEDADEMFHEM) enclose the F-box domain. The interval 391–415 (ITPRGGGVPSTSRSRSNNNNNMNNG) is disordered.

Heterotrimer of an A, B and C subunit.

The protein resides in the nucleus. Its function is as follows. SIII, also known as elongin, is a general transcription elongation factor that increases the RNA polymerase II transcription elongation past template-encoded arresting sites. Subunit A is transcriptionally active and its transcription activity is strongly enhanced by binding to the dimeric complex of the SIII regulatory subunits B and C (elongin BC complex). This is Transcription elongation factor B polypeptide 3 from Caenorhabditis elegans.